The primary structure comprises 352 residues: Quinolinate synthase (352 aa).

His-48 and Ser-69 together coordinate iminosuccinate. Cys-114 contributes to the [4Fe-4S] cluster binding site. Residues 140–142 (YAN) and Ser-157 each bind iminosuccinate. Cys-201 lines the [4Fe-4S] cluster pocket. Iminosuccinate is bound by residues 227-229 (HPE) and Thr-244. A [4Fe-4S] cluster-binding site is contributed by Cys-298.

This sequence belongs to the quinolinate synthase family. Type 1 subfamily. [4Fe-4S] cluster is required as a cofactor.

The protein resides in the cytoplasm. The catalysed reaction is iminosuccinate + dihydroxyacetone phosphate = quinolinate + phosphate + 2 H2O + H(+). The protein operates within cofactor biosynthesis; NAD(+) biosynthesis; quinolinate from iminoaspartate: step 1/1. Its function is as follows. Catalyzes the condensation of iminoaspartate with dihydroxyacetone phosphate to form quinolinate. The sequence is that of Quinolinate synthase from Pseudomonas fluorescens (strain Pf0-1).